The chain runs to 247 residues: Probable transcriptional regulatory protein Hhal_2210 (247 aa).

This sequence belongs to the TACO1 family.

The protein resides in the cytoplasm. This is Probable transcriptional regulatory protein Hhal_2210 from Halorhodospira halophila (strain DSM 244 / SL1) (Ectothiorhodospira halophila (strain DSM 244 / SL1)).